The primary structure comprises 65 residues: Prokaryotic ubiquitin-like protein UBact (65 aa).

The span at 1–17 shows a compositional bias: polar residues; the sequence is MEVNMPTTEQGQKNKQM. Residues 1–65 are disordered; it reads MEVNMPTTEQ…ARRYRQRTGE (65 aa). Basic and acidic residues predominate over residues 35–65; the sequence is KVEKPNTEEILKRMRKVDPDQARRYRQRTGE. An Isoglutamyl lysine isopeptide (Glu-Lys) (interchain with K-? in acceptor proteins) cross-link involves residue Glu65.

Belongs to the ubiquitin-like protein UBact family.

Functionally, may function as a protein modifier covalently attached to lysine residues of substrate proteins. This may serve to target the modified proteins for degradation by proteasomes. This Methylacidiphilum infernorum (isolate V4) (Methylokorus infernorum (strain V4)) protein is Prokaryotic ubiquitin-like protein UBact.